Consider the following 188-residue polypeptide: dCTP deaminase (188 aa).

Residues 111–116 (KSTYAR), 135–137 (TLE), Gln156, Tyr170, and Gln180 contribute to the dCTP site. The active-site Proton donor/acceptor is the Glu137.

The protein belongs to the dCTP deaminase family. As to quaternary structure, homotrimer.

The enzyme catalyses dCTP + H2O + H(+) = dUTP + NH4(+). Its pathway is pyrimidine metabolism; dUMP biosynthesis; dUMP from dCTP (dUTP route): step 1/2. Its function is as follows. Catalyzes the deamination of dCTP to dUTP. The chain is dCTP deaminase from Neisseria meningitidis serogroup C / serotype 2a (strain ATCC 700532 / DSM 15464 / FAM18).